Consider the following 89-residue polypeptide: Cell division protein ZapA (89 aa).

The protein belongs to the ZapA family. Type 2 subfamily. In terms of assembly, homodimer. Interacts with FtsZ.

Its subcellular location is the cytoplasm. Functionally, activator of cell division through the inhibition of FtsZ GTPase activity, therefore promoting FtsZ assembly into bundles of protofilaments necessary for the formation of the division Z ring. It is recruited early at mid-cell but it is not essential for cell division. This chain is Cell division protein ZapA, found in Bacillus thuringiensis (strain Al Hakam).